A 509-amino-acid chain; its full sequence is 2-isopropylmalate synthase (509 aa).

The region spanning 5–267 (IQIFDTTLRD…QTALNLEETK (263 aa)) is the Pyruvate carboxyltransferase domain. Mn(2+) is bound by residues Asp-14, His-202, His-204, and Asn-238. The tract at residues 391–509 (KLETLQLQYV…AAENVEKVGN (119 aa)) is regulatory domain.

The protein belongs to the alpha-IPM synthase/homocitrate synthase family. LeuA type 1 subfamily. As to quaternary structure, homodimer. It depends on Mn(2+) as a cofactor.

The protein resides in the cytoplasm. It catalyses the reaction 3-methyl-2-oxobutanoate + acetyl-CoA + H2O = (2S)-2-isopropylmalate + CoA + H(+). Its pathway is amino-acid biosynthesis; L-leucine biosynthesis; L-leucine from 3-methyl-2-oxobutanoate: step 1/4. Functionally, catalyzes the condensation of the acetyl group of acetyl-CoA with 3-methyl-2-oxobutanoate (2-ketoisovalerate) to form 3-carboxy-3-hydroxy-4-methylpentanoate (2-isopropylmalate). In Staphylococcus aureus (strain MW2), this protein is 2-isopropylmalate synthase.